We begin with the raw amino-acid sequence, 193 residues long: Probable DNA-directed RNA polymerase subunit delta (193 aa).

In terms of domain architecture, HTH HARE-type spans 14–83 (LSMIEVARAI…GENKWGLRSW (70 aa)). Acidic residues-rich tracts occupy residues 117 to 134 (GDDDAIDYGHDDPEDEDN) and 142 to 193 (EYDD…VVDE). The disordered stretch occupies residues 117–193 (GDDDAIDYGH…EYSDEEVVDE (77 aa)).

Belongs to the RpoE family. As to quaternary structure, RNAP is composed of a core of 2 alpha, a beta and a beta' subunits. The core is associated with a delta subunit and one of several sigma factors.

Its function is as follows. Participates in both the initiation and recycling phases of transcription. In the presence of the delta subunit, RNAP displays an increased specificity of transcription, a decreased affinity for nucleic acids, and an increased efficiency of RNA synthesis because of enhanced recycling. In Streptococcus suis (strain 05ZYH33), this protein is Probable DNA-directed RNA polymerase subunit delta.